Consider the following 301-residue polypeptide: Acetaldehyde dehydrogenase (301 aa).

Residue C130 is the Acyl-thioester intermediate of the active site. NAD(+) is bound by residues 161–169 and N272; that span reads SVGPGTRRN.

The protein belongs to the acetaldehyde dehydrogenase family.

The enzyme catalyses acetaldehyde + NAD(+) + CoA = acetyl-CoA + NADH + H(+). The protein is Acetaldehyde dehydrogenase (mhpF) of Cupriavidus taiwanensis (strain DSM 17343 / BCRC 17206 / CCUG 44338 / CIP 107171 / LMG 19424 / R1) (Ralstonia taiwanensis (strain LMG 19424)).